The chain runs to 178 residues: Alkyl hydroperoxide reductase AhpD (178 aa).

The Proton donor role is filled by cysteine 130. An intrachain disulfide couples cysteine 130 to cysteine 133. Cysteine 133 (cysteine sulfenic acid (-SOH) intermediate) is an active-site residue.

This sequence belongs to the AhpD family. As to quaternary structure, homotrimer.

The enzyme catalyses N(6)-[(R)-dihydrolipoyl]-L-lysyl-[lipoyl-carrier protein] + a hydroperoxide = N(6)-[(R)-lipoyl]-L-lysyl-[lipoyl-carrier protein] + an alcohol + H2O. Its function is as follows. Antioxidant protein with alkyl hydroperoxidase activity. Required for the reduction of the AhpC active site cysteine residues and for the regeneration of the AhpC enzyme activity. The sequence is that of Alkyl hydroperoxide reductase AhpD from Mycolicibacterium paratuberculosis (strain ATCC BAA-968 / K-10) (Mycobacterium paratuberculosis).